A 214-amino-acid polypeptide reads, in one-letter code: Killer cell lectin-like receptor subfamily B member 1 (214 aa).

Over 1 to 42 the chain is Cytoplasmic; it reads MDAPVLYAELNLAETRGLRCTSAPSLPQDACQGPGWHRVALK. A helical; Signal-anchor for type II membrane protein transmembrane segment spans residues 43-63; sequence LGCAGLIFLLMVLSVLVGFLV. The Extracellular segment spans residues 64-214; the sequence is QKPLIEKCSV…WICQKTLKHV (151 aa). The 111-residue stretch at 98–208 folds into the C-type lectin domain; sequence HCDKCLFTSQ…CSSDNHWICQ (111 aa). 2 cysteine pairs are disulfide-bonded: Cys119/Cys207 and Cys186/Cys199.

The protein resides in the membrane. This chain is Killer cell lectin-like receptor subfamily B member 1 (Klrb1), found in Mus musculus (Mouse).